Here is a 104-residue protein sequence, read N- to C-terminus: Pyrimidine/purine nucleoside phosphorylase (104 aa).

Belongs to the nucleoside phosphorylase PpnP family.

It catalyses the reaction a purine D-ribonucleoside + phosphate = a purine nucleobase + alpha-D-ribose 1-phosphate. The enzyme catalyses adenosine + phosphate = alpha-D-ribose 1-phosphate + adenine. The catalysed reaction is cytidine + phosphate = cytosine + alpha-D-ribose 1-phosphate. It carries out the reaction guanosine + phosphate = alpha-D-ribose 1-phosphate + guanine. It catalyses the reaction inosine + phosphate = alpha-D-ribose 1-phosphate + hypoxanthine. The enzyme catalyses thymidine + phosphate = 2-deoxy-alpha-D-ribose 1-phosphate + thymine. The catalysed reaction is uridine + phosphate = alpha-D-ribose 1-phosphate + uracil. It carries out the reaction xanthosine + phosphate = alpha-D-ribose 1-phosphate + xanthine. Catalyzes the phosphorolysis of diverse nucleosides, yielding D-ribose 1-phosphate and the respective free bases. Can use uridine, adenosine, guanosine, cytidine, thymidine, inosine and xanthosine as substrates. Also catalyzes the reverse reactions. This chain is Pyrimidine/purine nucleoside phosphorylase, found in Pelobacter propionicus (strain DSM 2379 / NBRC 103807 / OttBd1).